Reading from the N-terminus, the 100-residue chain is Large ribosomal subunit protein uL23 (100 aa).

It belongs to the universal ribosomal protein uL23 family. In terms of assembly, part of the 50S ribosomal subunit. Contacts protein L29, and trigger factor when it is bound to the ribosome.

One of the early assembly proteins it binds 23S rRNA. One of the proteins that surrounds the polypeptide exit tunnel on the outside of the ribosome. Forms the main docking site for trigger factor binding to the ribosome. The sequence is that of Large ribosomal subunit protein uL23 from Prochlorococcus marinus (strain MIT 9215).